Here is a 1413-residue protein sequence, read N- to C-terminus: DNA-directed RNA polymerase subunit beta' (1413 aa).

Zn(2+) contacts are provided by Cys-70, Cys-72, Cys-85, and Cys-88. 3 residues coordinate Mg(2+): Asp-460, Asp-462, and Asp-464. Cys-819, Cys-893, Cys-900, and Cys-903 together coordinate Zn(2+).

Belongs to the RNA polymerase beta' chain family. In terms of assembly, the RNAP catalytic core consists of 2 alpha, 1 beta, 1 beta' and 1 omega subunit. When a sigma factor is associated with the core the holoenzyme is formed, which can initiate transcription. The cofactor is Mg(2+). Zn(2+) serves as cofactor.

The catalysed reaction is RNA(n) + a ribonucleoside 5'-triphosphate = RNA(n+1) + diphosphate. Its function is as follows. DNA-dependent RNA polymerase catalyzes the transcription of DNA into RNA using the four ribonucleoside triphosphates as substrates. The protein is DNA-directed RNA polymerase subunit beta' of Burkholderia vietnamiensis (strain G4 / LMG 22486) (Burkholderia cepacia (strain R1808)).